A 431-amino-acid chain; its full sequence is 3-isopropylmalate dehydratase large subunit (431 aa).

[4Fe-4S] cluster contacts are provided by C300, C360, and C363.

The protein belongs to the aconitase/IPM isomerase family. LeuC type 2 subfamily. As to quaternary structure, heterodimer of LeuC and LeuD. The cofactor is [4Fe-4S] cluster.

The catalysed reaction is (2R,3S)-3-isopropylmalate = (2S)-2-isopropylmalate. Its pathway is amino-acid biosynthesis; L-leucine biosynthesis; L-leucine from 3-methyl-2-oxobutanoate: step 2/4. Functionally, catalyzes the isomerization between 2-isopropylmalate and 3-isopropylmalate, via the formation of 2-isopropylmaleate. The chain is 3-isopropylmalate dehydratase large subunit from Sulfurihydrogenibium sp. (strain YO3AOP1).